A 638-amino-acid polypeptide reads, in one-letter code: DNA gyrase subunit B (638 aa).

The 115-residue stretch at 423 to 537 (CEVYIVEGDS…KGHVYLAMPP (115 aa)) folds into the Toprim domain. Mg(2+) contacts are provided by Glu429, Asp502, and Asp504.

This sequence belongs to the type II topoisomerase GyrB family. In terms of assembly, heterotetramer, composed of two GyrA and two GyrB chains. In the heterotetramer, GyrA contains the active site tyrosine that forms a transient covalent intermediate with DNA, while GyrB binds cofactors and catalyzes ATP hydrolysis. Requires Mg(2+) as cofactor. Mn(2+) serves as cofactor. It depends on Ca(2+) as a cofactor.

The protein localises to the cytoplasm. The enzyme catalyses ATP-dependent breakage, passage and rejoining of double-stranded DNA.. Functionally, a type II topoisomerase that negatively supercoils closed circular double-stranded (ds) DNA in an ATP-dependent manner to modulate DNA topology and maintain chromosomes in an underwound state. Negative supercoiling favors strand separation, and DNA replication, transcription, recombination and repair, all of which involve strand separation. Also able to catalyze the interconversion of other topological isomers of dsDNA rings, including catenanes and knotted rings. Type II topoisomerases break and join 2 DNA strands simultaneously in an ATP-dependent manner. In Treponema denticola (strain ATCC 35405 / DSM 14222 / CIP 103919 / JCM 8153 / KCTC 15104), this protein is DNA gyrase subunit B.